A 281-amino-acid polypeptide reads, in one-letter code: Bifunctional protein FolD (281 aa).

NADP(+) is bound by residues 165–167 (GRG), T192, and V233.

It belongs to the tetrahydrofolate dehydrogenase/cyclohydrolase family. In terms of assembly, homodimer.

The catalysed reaction is (6R)-5,10-methylene-5,6,7,8-tetrahydrofolate + NADP(+) = (6R)-5,10-methenyltetrahydrofolate + NADPH. It carries out the reaction (6R)-5,10-methenyltetrahydrofolate + H2O = (6R)-10-formyltetrahydrofolate + H(+). It participates in one-carbon metabolism; tetrahydrofolate interconversion. In terms of biological role, catalyzes the oxidation of 5,10-methylenetetrahydrofolate to 5,10-methenyltetrahydrofolate and then the hydrolysis of 5,10-methenyltetrahydrofolate to 10-formyltetrahydrofolate. The protein is Bifunctional protein FolD of Mycobacterium ulcerans (strain Agy99).